A 361-amino-acid polypeptide reads, in one-letter code: Putative F-box protein At3g18340 (361 aa).

An F-box domain is found at 1–46 (MASGKLPWELEEEILCRLPPGSLVRLRSVCKHWNDLYNDKWFIKKS).

The protein is Putative F-box protein At3g18340 of Arabidopsis thaliana (Mouse-ear cress).